The following is a 152-amino-acid chain: Sec-independent protein translocase protein TatB (152 aa).

A helical membrane pass occupies residues 1 to 21 (MLDVGFGELFCFGIIALLVLG).

Belongs to the TatB family. In terms of assembly, the Tat system comprises two distinct complexes: a TatABC complex, containing multiple copies of TatA, TatB and TatC subunits, and a separate TatA complex, containing only TatA subunits. Substrates initially bind to the TatABC complex, which probably triggers association of the separate TatA complex to form the active translocon.

It localises to the cell inner membrane. Its function is as follows. Part of the twin-arginine translocation (Tat) system that transports large folded proteins containing a characteristic twin-arginine motif in their signal peptide across membranes. Together with TatC, TatB is part of a receptor directly interacting with Tat signal peptides. TatB may form an oligomeric binding site that transiently accommodates folded Tat precursor proteins before their translocation. The chain is Sec-independent protein translocase protein TatB from Acinetobacter baylyi (strain ATCC 33305 / BD413 / ADP1).